The chain runs to 605 residues: Protein phosphatase 1D (605 aa).

Positions 1–101 (MAGLYSLGVS…CRRRSSVAFF (101 aa)) are interaction with CHEK1. Residues 8 to 375 (GVSVFSDQGG…DNTSAIVICI (368 aa)) form the PPM-type phosphatase domain. Residues 28–90 (VVEPEPTAEE…DAGASPAPSR (63 aa)) are disordered. Phosphoserine occurs at positions 40 and 85. Residues aspartate 105, glycine 106, aspartate 314, and aspartate 366 each contribute to the Mn(2+) site. The tract at residues 516-591 (STPGQMKAQE…RRLRGQKKIG (76 aa)) is disordered. 2 stretches are compositionally biased toward polar residues: residues 530–544 (PPTN…SNSG) and 555–577 (LSRS…NSVK). Residues 579-588 (TMRRRLRGQK) are compositionally biased toward basic residues.

It belongs to the PP2C family. As to quaternary structure, interacts with CHEK1 and CHEK2; dephosphorylates them. Interacts with MAPK14. Mg(2+) is required as a cofactor. It depends on Mn(2+) as a cofactor. In terms of tissue distribution, expressed in fetal and adult brain. Also detected in fetal liver and skeletal muscle, but not in their adult counterparts.

It is found in the nucleus. The protein resides in the cytoplasm. It localises to the cytosol. It catalyses the reaction O-phospho-L-seryl-[protein] + H2O = L-seryl-[protein] + phosphate. The enzyme catalyses O-phospho-L-threonyl-[protein] + H2O = L-threonyl-[protein] + phosphate. Functionally, involved in the negative regulation of p53 expression. Required for the relief of p53-dependent checkpoint mediated cell cycle arrest. Binds to and dephosphorylates 'Ser-15' of TP53 and 'Ser-345' of CHEK1 which contributes to the functional inactivation of these proteins. Mediates MAPK14 dephosphorylation and inactivation. Is also an important regulator of global heterochromatin silencing and critical in maintaining genome integrity. This Homo sapiens (Human) protein is Protein phosphatase 1D (PPM1D).